A 764-amino-acid chain; its full sequence is Myotubularin-related protein 10-B (764 aa).

The region spanning 208-649 (FESYSDWDRE…THIQIWKLCY (442 aa)) is the Myotubularin phosphatase domain.

Belongs to the protein-tyrosine phosphatase family. Non-receptor class myotubularin subfamily.

The polypeptide is Myotubularin-related protein 10-B (mtmr10-b) (Xenopus laevis (African clawed frog)).